The primary structure comprises 277 residues: NH(3)-dependent NAD(+) synthetase (277 aa).

47 to 54 (GISGGQDS) contacts ATP. Mg(2+) is bound at residue Asp53. Position 141 (Arg141) interacts with deamido-NAD(+). An ATP-binding site is contributed by Thr161. Residue Glu166 coordinates Mg(2+). Residues Lys174 and Asp181 each coordinate deamido-NAD(+). ATP contacts are provided by Lys190 and Thr212. Position 261–262 (261–262 (HK)) interacts with deamido-NAD(+).

Belongs to the NAD synthetase family. As to quaternary structure, homodimer.

It catalyses the reaction deamido-NAD(+) + NH4(+) + ATP = AMP + diphosphate + NAD(+) + H(+). The protein operates within cofactor biosynthesis; NAD(+) biosynthesis; NAD(+) from deamido-NAD(+) (ammonia route): step 1/1. In terms of biological role, catalyzes the ATP-dependent amidation of deamido-NAD to form NAD. Uses ammonia as a nitrogen source. This Lactobacillus johnsonii (strain CNCM I-12250 / La1 / NCC 533) protein is NH(3)-dependent NAD(+) synthetase.